The chain runs to 239 residues: Transcriptional regulatory protein DcuR (239 aa).

Residues 3–121 (NVLIIDDDAM…RFEEALTGWR (119 aa)) enclose the Response regulatory domain. Aspartate 56 bears the 4-aspartylphosphate mark. A DNA-binding region (H-T-H motif) is located at residues 181-200 (TDELANEVNISRVSCRKYLI).

In terms of processing, phosphorylated and activated by DcuS.

It is found in the cytoplasm. Its function is as follows. Member of the two-component regulatory system DcuR/DcuS. Involved in the C4-dicarboxylate-stimulated regulation of the genes encoding the anaerobic fumarate respiratory system (frdABCD; nuoAN; dcuB; dcuC; sdhCDAB; etc.). Weakly regulates the aerobic C4-dicarboxylate transporter dctA. The sequence is that of Transcriptional regulatory protein DcuR (dcuR) from Escherichia coli O6:H1 (strain CFT073 / ATCC 700928 / UPEC).